Reading from the N-terminus, the 622-residue chain is Ferredoxin-fold anticodon-binding domain-containing protein 1 homolog (622 aa).

The FDX-ACB domain occupies 529 to 622 (LYPPCYVHDV…IQRQLHVSPR (94 aa)).

This is Ferredoxin-fold anticodon-binding domain-containing protein 1 homolog (Fdxacb1) from Mus musculus (Mouse).